The following is a 541-amino-acid chain: ATP synthase subunit alpha (541 aa).

Position 169-176 (169-176 (GDRQTGKT)) interacts with ATP. A disordered region spans residues 506-541 (NTLLNVEEGDTGEEENNEGHNKAEQDTEEKDTEEVV). Acidic residues-rich tracts occupy residues 512-521 (EEGDTGEEEN) and 531-541 (DTEEKDTEEVV).

Belongs to the ATPase alpha/beta chains family. In terms of assembly, F-type ATPases have 2 components, CF(1) - the catalytic core - and CF(0) - the membrane proton channel. CF(1) has five subunits: alpha(3), beta(3), gamma(1), delta(1), epsilon(1). CF(0) has three main subunits: a(1), b(2) and c(9-12). The alpha and beta chains form an alternating ring which encloses part of the gamma chain. CF(1) is attached to CF(0) by a central stalk formed by the gamma and epsilon chains, while a peripheral stalk is formed by the delta and b chains.

Its subcellular location is the cell inner membrane. It carries out the reaction ATP + H2O + 4 H(+)(in) = ADP + phosphate + 5 H(+)(out). Produces ATP from ADP in the presence of a proton gradient across the membrane. The alpha chain is a regulatory subunit. The chain is ATP synthase subunit alpha from Halothermothrix orenii (strain H 168 / OCM 544 / DSM 9562).